Consider the following 147-residue polypeptide: Hemoglobin subunit delta (147 aa).

Residues 3–147 form the Globin domain; that stretch reads HLTADETALV…VANALAHKYH (145 aa). At Ser-51 the chain carries Phosphoserine. The heme b site is built by His-64 and His-93.

The protein belongs to the globin family. As to quaternary structure, heterotetramer of two delta chains and two alpha chains. As to expression, red blood cells.

This chain is Hemoglobin subunit delta (HBD), found in Dugong dugon (Dugong).